A 117-amino-acid polypeptide reads, in one-letter code: Putative membrane protein insertion efficiency factor (117 aa).

The protein belongs to the UPF0161 family.

The protein resides in the cell inner membrane. Its function is as follows. Could be involved in insertion of integral membrane proteins into the membrane. This is Putative membrane protein insertion efficiency factor from Bartonella henselae (strain ATCC 49882 / DSM 28221 / CCUG 30454 / Houston 1) (Rochalimaea henselae).